Here is a 143-residue protein sequence, read N- to C-terminus: Peptide methionine sulfoxide reductase MsrB (143 aa).

In terms of domain architecture, MsrB spans 16-139; that stretch reads DAELRRRLTP…NSAALNFESR (124 aa). Zn(2+) contacts are provided by Cys55, Cys58, Cys104, and Cys107. Catalysis depends on Cys128, which acts as the Nucleophile.

The protein belongs to the MsrB Met sulfoxide reductase family. Zn(2+) serves as cofactor.

It carries out the reaction L-methionyl-[protein] + [thioredoxin]-disulfide + H2O = L-methionyl-(R)-S-oxide-[protein] + [thioredoxin]-dithiol. The protein is Peptide methionine sulfoxide reductase MsrB of Burkholderia cenocepacia (strain ATCC BAA-245 / DSM 16553 / LMG 16656 / NCTC 13227 / J2315 / CF5610) (Burkholderia cepacia (strain J2315)).